Here is a 513-residue protein sequence, read N- to C-terminus: Protein disulfide-isomerase (513 aa).

A signal peptide spans 1-25 (MAISKVWISLLLALAVVLSAPAARA). Residues 26 to 149 (EEAAAAEEAA…IVEYLKKQVG (124 aa)) form the Thioredoxin 1 domain. Residues Cys-67 and Cys-70 each act as nucleophile in the active site. Cysteines 67 and 70 form a disulfide. Residue Asn-282 is glycosylated (N-linked (GlcNAc...) asparagine). The Thioredoxin 2 domain occupies 369-488 (FRKSEPIPEA…IVDYIRKNKE (120 aa)). Residues Cys-411 and Cys-414 each act as nucleophile in the active site. Cys-411 and Cys-414 are oxidised to a cystine. Low complexity predominate over residues 491–507 (GQAAAATEKAAEPAATE). The interval 491–513 (GQAAAATEKAAEPAATEPLKDEL) is disordered. Positions 510-513 (KDEL) match the Prevents secretion from ER motif.

Belongs to the protein disulfide isomerase family.

It is found in the endoplasmic reticulum lumen. It carries out the reaction Catalyzes the rearrangement of -S-S- bonds in proteins.. Participates in the folding of proteins containing disulfide bonds, may be involved in glycosylation, prolyl hydroxylation and triglyceride transfer. The protein is Protein disulfide-isomerase (PDI) of Hordeum vulgare (Barley).